Here is a 234-residue protein sequence, read N- to C-terminus: Segregation and condensation protein A (234 aa).

It belongs to the ScpA family. In terms of assembly, component of a cohesin-like complex composed of ScpA, ScpB and the Smc homodimer, in which ScpA and ScpB bind to the head domain of Smc. The presence of the three proteins is required for the association of the complex with DNA.

Its subcellular location is the cytoplasm. Its function is as follows. Participates in chromosomal partition during cell division. May act via the formation of a condensin-like complex containing Smc and ScpB that pull DNA away from mid-cell into both cell halves. The sequence is that of Segregation and condensation protein A from Streptococcus pyogenes serotype M18 (strain MGAS8232).